The sequence spans 412 residues: Argininosuccinate synthase (412 aa).

ATP-binding positions include 10-18 and alanine 36; that span reads AYSGGLDTS. Residues tyrosine 87 and serine 92 each coordinate L-citrulline. Position 87 is a phosphotyrosine (tyrosine 87). An N6-acetyllysine modification is found at lysine 112. Tyrosine 113 carries the phosphotyrosine modification. 115–123 is a binding site for ATP; sequence SHGATGKGN. Residues threonine 119, asparagine 123, and aspartate 124 each contribute to the L-aspartate site. Asparagine 123 contributes to the L-citrulline binding site. Arginine 127 contacts L-citrulline. N6-acetyllysine; by CLOCK is present on residues lysine 165 and lysine 176. Residues serine 180 and serine 189 each coordinate L-citrulline. Phosphoserine is present on serine 180. Serine 219 carries the phosphoserine modification. Positions 270 and 282 each coordinate L-citrulline.

It belongs to the argininosuccinate synthase family. Type 1 subfamily. In terms of assembly, homotetramer. Interacts with NMRAL1. Interacts with CLOCK; in a circadian manner. Forms tissue-specific complexes with ASL, SLC7A1, HSP90AA1 and nitric oxide synthase NOS1, NOS2 or NOS3; the complex regulates cell-autonomous L-arginine synthesis and citrulline recycling while channeling extracellular L-arginine to nitric oxide synthesis pathway. Post-translationally, acetylated by CLOCK in a circadian manner which negatively regulates its enzyme activity. Deacetylated by histone deacetylases.

The protein localises to the cytoplasm. It localises to the cytosol. The enzyme catalyses L-citrulline + L-aspartate + ATP = 2-(N(omega)-L-arginino)succinate + AMP + diphosphate + H(+). Its pathway is amino-acid biosynthesis; L-arginine biosynthesis; L-arginine from L-ornithine and carbamoyl phosphate: step 2/3. It participates in nitrogen metabolism; urea cycle; (N(omega)-L-arginino)succinate from L-aspartate and L-citrulline: step 1/1. Functionally, one of the enzymes of the urea cycle, the metabolic pathway transforming neurotoxic amonia produced by protein catabolism into inocuous urea in the liver of ureotelic animals. Catalyzes the formation of arginosuccinate from aspartate, citrulline and ATP and together with ASL it is responsible for the biosynthesis of arginine in most body tissues. This is Argininosuccinate synthase from Bos taurus (Bovine).